A 479-amino-acid chain; its full sequence is Aspartyl/glutamyl-tRNA(Asn/Gln) amidotransferase subunit B (479 aa).

Belongs to the GatB/GatE family. GatB subfamily. As to quaternary structure, heterotrimer of A, B and C subunits.

The catalysed reaction is L-glutamyl-tRNA(Gln) + L-glutamine + ATP + H2O = L-glutaminyl-tRNA(Gln) + L-glutamate + ADP + phosphate + H(+). It carries out the reaction L-aspartyl-tRNA(Asn) + L-glutamine + ATP + H2O = L-asparaginyl-tRNA(Asn) + L-glutamate + ADP + phosphate + 2 H(+). Allows the formation of correctly charged Asn-tRNA(Asn) or Gln-tRNA(Gln) through the transamidation of misacylated Asp-tRNA(Asn) or Glu-tRNA(Gln) in organisms which lack either or both of asparaginyl-tRNA or glutaminyl-tRNA synthetases. The reaction takes place in the presence of glutamine and ATP through an activated phospho-Asp-tRNA(Asn) or phospho-Glu-tRNA(Gln). This Streptococcus pyogenes serotype M28 (strain MGAS6180) protein is Aspartyl/glutamyl-tRNA(Asn/Gln) amidotransferase subunit B.